A 213-amino-acid chain; its full sequence is Pyridoxine/pyridoxamine 5'-phosphate oxidase (213 aa).

Residues 8–11 (RREY) and lysine 67 contribute to the substrate site. Residues 62 to 67 (RIVLLK), 77 to 78 (FT), arginine 83, lysine 84, and glutamine 106 contribute to the FMN site. Positions 124, 128, and 132 each coordinate substrate. FMN contacts are provided by residues 141-142 (QS) and tryptophan 186. 192 to 194 (RLH) contributes to the substrate binding site. Arginine 196 contacts FMN.

This sequence belongs to the pyridoxamine 5'-phosphate oxidase family. Homodimer. FMN is required as a cofactor.

It catalyses the reaction pyridoxamine 5'-phosphate + O2 + H2O = pyridoxal 5'-phosphate + H2O2 + NH4(+). The catalysed reaction is pyridoxine 5'-phosphate + O2 = pyridoxal 5'-phosphate + H2O2. It functions in the pathway cofactor metabolism; pyridoxal 5'-phosphate salvage; pyridoxal 5'-phosphate from pyridoxamine 5'-phosphate: step 1/1. It participates in cofactor metabolism; pyridoxal 5'-phosphate salvage; pyridoxal 5'-phosphate from pyridoxine 5'-phosphate: step 1/1. In terms of biological role, catalyzes the oxidation of either pyridoxine 5'-phosphate (PNP) or pyridoxamine 5'-phosphate (PMP) into pyridoxal 5'-phosphate (PLP). This chain is Pyridoxine/pyridoxamine 5'-phosphate oxidase, found in Shewanella sediminis (strain HAW-EB3).